Here is a 134-residue protein sequence, read N- to C-terminus: Nif-regulating protein A (134 aa).

A C4-type; atypical zinc finger spans residues Cys3–His36.

Interacts with the general archaeal transcription factors TBPs.

Functionally, involved in nitrogen regulation. Enhances the transcription of the nitrogen fixation (nif) operon under nitrogen-limited conditions. Acts by binding to the nifH promoter region. This chain is Nif-regulating protein A, found in Methanosarcina mazei (strain ATCC BAA-159 / DSM 3647 / Goe1 / Go1 / JCM 11833 / OCM 88) (Methanosarcina frisia).